Consider the following 839-residue polypeptide: ATP-binding cassette sub-family F member 1 (839 aa).

The interval 1–258 is disordered; the sequence is MPKGPKQQPP…KKEKKKLKKQ (258 aa). A Phosphoserine modification is found at Ser-22. Positions 29–39 are enriched in basic residues; the sequence is KKGKKDKKTKK. Residues 47-64 are compositionally biased toward basic and acidic residues; that stretch reads VEDKQAGEEEKLQKEKEQ. Basic residues predominate over residues 71–83; it reads QKKKRDTRKGRRK. A phosphoserine mark is found at Ser-105, Ser-109, and Ser-140. The segment covering 136–149 has biased composition (acidic residues); that stretch reads IQDESEEEKEEEEE. Residues 150-162 show a composition bias toward basic and acidic residues; it reads KPVLKPAKPEKNR. Thr-195 is modified (phosphothreonine). Phosphoserine is present on Ser-197. Residues 206-223 show a composition bias toward basic and acidic residues; it reads TKEKEPPRPGKDKDKKGA. Ser-227 carries the phosphoserine modification. Over residues 247-256 the composition is skewed to basic residues; that stretch reads LSKKEKKKLK. In terms of domain architecture, ABC transporter 1 spans 298-542; it reads IKLEKFSISA…MYQQKQKELL (245 aa). 330 to 337 contacts ATP; sequence GPNGKGKT. The segment covering 553–574 has biased composition (basic and acidic residues); sequence KELKAGGKSTKQAEKQTKEVLT. The disordered stretch occupies residues 553 to 600; that stretch reads KELKAGGKSTKQAEKQTKEVLTRKQQKCRRKNQDEESQDPPELLKRPR. The residue at position 589 (Ser-589) is a Phosphoserine. The 216-residue stretch at 619–834 folds into the ABC transporter 2 domain; it reads LGLHGVTFGY…VLEALGEVMV (216 aa). 652–659 is a binding site for ATP; that stretch reads GPNGVGKS.

As to quaternary structure, interacts (via N-terminus) with EIF2S1; the interaction is independent of its phosphorylated status. Associates (via both ABC transporter domains) with the ribosomes. Phosphorylated at phosphoserine and phosphothreonine. Phosphorylation on Ser-109 and Ser-140 by CK2; inhibits association of EIF2 with ribosomes.

It is found in the cytoplasm. The protein resides in the nucleus. Its subcellular location is the nucleoplasm. The protein localises to the nucleus envelope. In terms of biological role, required for efficient Cap- and IRES-mediated mRNA translation initiation. Not involved in the ribosome biogenesis. The protein is ATP-binding cassette sub-family F member 1 (Abcf1) of Rattus norvegicus (Rat).